The sequence spans 336 residues: MSDSDSENKQTTTTATSVTQRLLLSLKEAAKIIGTKGTKIQKVRDDNNVKIGISERKERCSDRILICTGSIEDVSNAIGDICEILLSEDVVTNDEDSNEKENDEYNSIEDEKFVYPFLNFRLAKPTLDEVNDAETLKKIINIRVLVTRAQCSAIIGTKGDRIKSLIENRGVRMIASNQTLPDSDERLLEIQGTSMAITKVLEDINAVISNEVRATREKRYVPHVRRRNQPVSTNTSSNTGSSKSFDEEFKSIVKIPEAYVGAIVGRQGNRIANLRKYSKTKIVIEKRASEVSDDAERIFEIISNDIKNVELAESMLKKNLETEIQRRKEMEETESA.

3 KH domains span residues 17-81 (SVTQ…IGDI), 139-204 (IINI…LEDI), and 248-316 (EFKS…ESML).

This sequence belongs to the HEK2 family. In terms of assembly, binds RNA.

It is found in the cytoplasm. It localises to the P-body. The protein localises to the nucleus. Its subcellular location is the chromosome. The protein resides in the telomere. Functionally, RNA-binding protein involved in the correct localization of transcripts in the cell. RNA localization is a widespread mechanism for achieving localized protein synthesis. Involved in structural and functional organization of telomeric chromatin and regulates silencing at the HMR locus. In Vanderwaltozyma polyspora (strain ATCC 22028 / DSM 70294 / BCRC 21397 / CBS 2163 / NBRC 10782 / NRRL Y-8283 / UCD 57-17) (Kluyveromyces polysporus), this protein is Heterogeneous nuclear rnp K-like protein 2 (HEK2).